Reading from the N-terminus, the 168-residue chain is Pollen allergen Che a 1 (168 aa).

The first 25 residues, 1 to 25, serve as a signal peptide directing secretion; the sequence is MAKCQAVFLLVGALCVLSLAGVANA. 3 disulfides stabilise this stretch: C38–C109, C41–C153, and C62–C97. N-linked (GlcNAc...) asparagine glycosylation occurs at N64.

This sequence belongs to the Ole e I family.

Its subcellular location is the secreted. This is Pollen allergen Che a 1 from Chenopodium album (Fat hen).